The sequence spans 61 residues: Bacteriocin leucocin-A (61 aa).

Residues 1–24 (MMNMKPTESYEQLDNSALEQVVGG) constitute a propeptide that is removed on maturation. An intrachain disulfide couples Cys-33 to Cys-38.

Belongs to the bacteriocin class IIA/YGNGV family.

Its subcellular location is the secreted. In terms of biological role, inhibits a wide spectrum of lactic acid bacteria. This is Bacteriocin leucocin-A (lcnA) from Leuconostoc gelidum.